The primary structure comprises 73 residues: Conotoxin im23b (73 aa).

An N-terminal signal peptide occupies residues 1–22; that stretch reads MIMRMTLTLFVLVVMTAASASG. Positions 23–28 are excised as a propeptide; sequence DALTEA. Cystine bridges form between cysteine 34–cysteine 41, cysteine 45–cysteine 55, and cysteine 56–cysteine 71.

This sequence belongs to the conotoxin K superfamily. In terms of tissue distribution, expressed by the venom duct.

It is found in the secreted. In terms of biological role, neurotoxin that induces excitatory symptoms in mice following intracranial administration. No symptoms are observed after intraperitoneal and intravenous (tail vein) injections. This chain is Conotoxin im23b, found in Conus imperialis (Imperial cone).